We begin with the raw amino-acid sequence, 371 residues long: Cytochrome b (371 aa).

Helical transmembrane passes span 25 to 45 (FGSM…FLAI), 69 to 90 (WIMQ…YIHI), 105 to 125 (WLSG…GYVL), and 170 to 190 (FFAL…IHII). Heme b-binding residues include His-75 and His-89. Heme b is bound by residues His-174 and His-188. A ubiquinone is bound at residue His-193. Helical transmembrane passes span 218–238 (YKDT…LSFS), 280–300 (LGGT…PFTH), 312–332 (LAQM…WTAS), and 339–358 (FIII…IMNP).

The protein belongs to the cytochrome b family. In terms of assembly, the cytochrome bc1 complex contains 3 respiratory subunits (MT-CYB, CYC1 and UQCRFS1), 2 core proteins (UQCRC1 and UQCRC2) and probably 6 low-molecular weight proteins. Requires heme b as cofactor.

It is found in the mitochondrion inner membrane. Component of the ubiquinol-cytochrome c reductase complex (complex III or cytochrome b-c1 complex) that is part of the mitochondrial respiratory chain. The b-c1 complex mediates electron transfer from ubiquinol to cytochrome c. Contributes to the generation of a proton gradient across the mitochondrial membrane that is then used for ATP synthesis. The sequence is that of Cytochrome b (MT-CYB) from Sinomicrurus kelloggi (Kellogg's coral snake).